The primary structure comprises 377 residues: Lactosylceramide 1,3-N-acetyl-beta-D-glucosaminyltransferase (377 aa).

Over 1–14 (MRVFVSSRRVKRWQ) the chain is Cytoplasmic. A helical; Signal-anchor for type II membrane protein membrane pass occupies residues 15–35 (FFHLFAICFILSFMVFWGPIN). The Lumenal portion of the chain corresponds to 36 to 377 (NYIMSHMKSY…NSYPCRAAFA (342 aa)). Asn-58 is a glycosylation site (N-linked (GlcNAc...) asparagine).

The protein belongs to the glycosyltransferase 31 family.

Its subcellular location is the golgi apparatus membrane. The enzyme catalyses a beta-D-Gal-(1-&gt;4)-beta-D-Glc-(1&lt;-&gt;1)-Cer(d18:1(4E)) + UDP-N-acetyl-alpha-D-glucosamine = a beta-D-GlcNAc-(1-&gt;3)-beta-D-Gal-(1-&gt;4)-beta-D-Glc-(1&lt;-&gt;1)-Cer(d18:1(4E)) + UDP + H(+). The catalysed reaction is a neolactoside nLc4Cer(d18:1(4E)) + UDP-N-acetyl-alpha-D-glucosamine = a neolactoside IV(3)-beta-GlcNAc-nLc4Cer(d18:1(4E)) + UDP + H(+). Its pathway is protein modification; protein glycosylation. Functionally, beta-1,3-N-acetylglucosaminyltransferase that plays a key role in the synthesis of lacto- or neolacto-series carbohydrate chains on glycolipids, notably by participating in biosynthesis of HNK-1 and Lewis X carbohydrate structures. Has strong activity toward lactosylceramide (LacCer) and neolactotetraosylceramide (nLc(4)Cer; paragloboside), resulting in the synthesis of Lc(3)Cer and neolactopentaosylceramide (nLc(5)Cer), respectively. Probably plays a central role in regulating neolacto-series glycolipid synthesis during embryonic development. This chain is Lactosylceramide 1,3-N-acetyl-beta-D-glucosaminyltransferase, found in Rattus norvegicus (Rat).